The primary structure comprises 190 residues: UPF0301 protein Reut_A0705 (190 aa).

Belongs to the UPF0301 (AlgH) family.

The polypeptide is UPF0301 protein Reut_A0705 (Cupriavidus pinatubonensis (strain JMP 134 / LMG 1197) (Cupriavidus necator (strain JMP 134))).